We begin with the raw amino-acid sequence, 255 residues long: H-2 class II histocompatibility antigen, E-K alpha chain (255 aa).

Positions 1 to 25 (MATIGALVLRFFFIAVLMSSQKSWA) are cleaved as a signal peptide. The alpha-1 stretch occupies residues 26-109 (IKEEHTIIQA…ERSNNTPDAN (84 aa)). At 26–216 (IKEEHTIIQA…EKTLLPETKE (191 aa)) the chain is on the extracellular side. The alpha-2 stretch occupies residues 110–203 (VAPEVTVLSR…GLEEPLRKHW (94 aa)). In terms of domain architecture, Ig-like C1-type spans 112–204 (PEVTVLSRSP…LEEPLRKHWE (93 aa)). A disulfide bridge links Cys-132 with Cys-188. Asn-143 carries an N-linked (GlcNAc...) asparagine glycan. The interval 204-216 (EFEEKTLLPETKE) is connecting peptide. Residues 217-242 (NVVCALGLFVGLVGIVVGIILIMKGI) traverse the membrane as a helical segment. At 243–255 (KKRNVVERRQGAL) the chain is on the cytoplasmic side.

It belongs to the MHC class II family.

It localises to the membrane. The protein is H-2 class II histocompatibility antigen, E-K alpha chain of Mus musculus (Mouse).